We begin with the raw amino-acid sequence, 439 residues long: Adenylosuccinate synthetase (439 aa).

GTP contacts are provided by residues 25-31 (GDEGKGK), 53-55 (GHT), and K62. D26 acts as the Proton acceptor in catalysis. Residues D26 and G53 each coordinate Mg(2+). Residues 26 to 29 (DEGK) and 51 to 54 (NAGH) each bind IMP. The active-site Proton donor is H54. Residues T141, R155, N232, and T247 each coordinate IMP. A GTP-binding site is contributed by T307. 307–313 (TTTNRPR) lines the substrate pocket. R311 contributes to the IMP binding site. GTP is bound by residues R313, 339 to 341 (KLD), and 425 to 427 (GVG).

This sequence belongs to the adenylosuccinate synthetase family. Homodimer. Mg(2+) serves as cofactor.

Its subcellular location is the cytoplasm. The enzyme catalyses IMP + L-aspartate + GTP = N(6)-(1,2-dicarboxyethyl)-AMP + GDP + phosphate + 2 H(+). The protein operates within purine metabolism; AMP biosynthesis via de novo pathway; AMP from IMP: step 1/2. Plays an important role in the salvage pathway for purine nucleotide biosynthesis. Catalyzes the first committed step in the biosynthesis of AMP from IMP. This chain is Adenylosuccinate synthetase, found in Plasmodium yoelii yoelii.